The chain runs to 149 residues: Alpha-crystallin A chain (149 aa).

The sHSP domain maps to 41 to 149; sequence LFRTVLESGI…DTSYSERPIP (109 aa). Zn(2+) contacts are provided by H89, E91, and H96.

The protein belongs to the small heat shock protein (HSP20) family. In terms of assembly, heteropolymer composed of three CRYAA and one CRYAB subunits. Inter-subunit bridging via zinc ions enhances stability, which is crucial as there is no protein turn over in the lens. Zinc coordination is achieved at least by His-89, Glu-91 and His-96. His-83 and Glu-85 come from the same molecule within the oligomer, while His-90 residue is provided by another molecule. Can also form homodimers and homotetramers (dimers of dimers) which serve as the building blocks of homooligomers.

The protein resides in the cytoplasm. Its subcellular location is the nucleus. Contributes to the transparency and refractive index of the lens. May act as a chaperone, preventing aggregation of various proteins under a wide range of stress conditions. The protein is Alpha-crystallin A chain (CRYAA) of Trachemys scripta elegans (Red-eared slider turtle).